The sequence spans 349 residues: Decapping nuclease RAI1 (349 aa).

An a divalent metal cation-binding site is contributed by Glu157. Glu205 provides a ligand contact to substrate. Residues Asp207, Glu222, and Leu223 each contribute to the a divalent metal cation site. Substrate is bound by residues Lys224 and Gln248.

It belongs to the DXO/Dom3Z family. In terms of assembly, interacts with RAT1; the interaction is direct, stabilizes RAT1 protein structure and stimulates its exoribonuclease activity. The interaction also stimulates RAI1 pyrophosphohydrolase activity, probably by recruiting it to mRNA substrates. A divalent metal cation is required as a cofactor.

It localises to the nucleus. The enzyme catalyses a 5'-end NAD(+)-phospho-ribonucleoside in mRNA + H2O = a 5'-end phospho-ribonucleoside in mRNA + NAD(+) + H(+). It catalyses the reaction a 5'-end (N(7)-methyl 5'-triphosphoguanosine)-ribonucleoside-ribonucleotide in mRNA + H2O = a (N(7)-methyl 5'-triphosphoguanosine)-nucleoside + a 5'-end phospho-ribonucleoside in mRNA + H(+). It carries out the reaction a 5'-end triphospho-ribonucleoside in mRNA + H2O = a 5'-end phospho-ribonucleoside in mRNA + diphosphate + H(+). Its function is as follows. Decapping enzyme for NAD-capped RNAs: specifically hydrolyzes the nicotinamide adenine dinucleotide (NAD) cap from a subset of RNAs by removing the entire NAD moiety from the 5'-end of an NAD-capped RNA. The NAD-cap is present at the 5'-end of some RNAs and snoRNAs. In contrast to the canonical 5'-end N7 methylguanosine (m7G) cap, the NAD cap promotes mRNA decay. Also acts as a non-canonical decapping enzyme that removes the entire cap structure of m7G capped or incompletely capped RNAs. Has decapping activity toward incomplete 5'-end m7G cap mRNAs such as unmethylated 5'-end-capped RNA (cap0), while it has no activity toward 2'-O-ribose methylated m7G cap (cap1). Also possesses RNA 5'-pyrophosphohydrolase activity by hydrolyzing the 5'-end triphosphate to release pyrophosphates. Stimulates exoribonuclease activity of Rat1, allowing it to degrade RNAs with stable secondary structure more effectively. This chain is Decapping nuclease RAI1 (RAI1), found in Yarrowia lipolytica (strain CLIB 122 / E 150) (Yeast).